We begin with the raw amino-acid sequence, 264 residues long: Carbohydrate deacetylase (264 aa).

Asp-20 acts as the Proton acceptor in catalysis. The Mg(2+) site is built by Asp-21, His-60, and His-127. The Proton donor role is filled by His-215.

This sequence belongs to the YdjC deacetylase family. In terms of assembly, homodimer. The cofactor is Mg(2+).

Its function is as follows. Probably catalyzes the deacetylation of acetylated carbohydrates an important step in the degradation of oligosaccharides. This is Carbohydrate deacetylase from Thermus thermophilus (strain ATCC 27634 / DSM 579 / HB8).